A 469-amino-acid chain; its full sequence is MTTNRKFAIAILAAGKGTRLKSKHPKVLHEIAGKPLLDHVVAAAAKVVPPSQIFAIIGHEADRVREAMQASGIQFVEQKEQRGTGHAILQTRDALKDFDDVLVLSGDVPLIRTDTVERLFAFHREHAAAMTILTTEPPDPFGYGRVFRKHAGQSDEVDRIVEQKQLTPEQARNREINSGIYAFRVQPLFANLDKLTTDNPHGEYYLTDMAAILGGASEKVVAIRADDSHEVLGVNTRQDLASLDAHLRLQKCQQLMSAGVSIFKPETCMIDSDVEVGPDTIIEPFVQLLGNTKIGADCHIKSYTVISNSTIGDGVLLRHGCIVDSSKVAARALLGPYCHLRPASDIGEEAHIGNFVETKKTRVGKGSKANHLTYLGDTEIGTGVNIGAGTITCNYDGVNKFGTIIGDNVFVGSDTTLVAPIELGKGSYIGAGSCITENVPDDALAIGRGRQVVKEGWATKKRAEQKKKK.

Residues Met-1–Arg-237 are pyrophosphorylase. UDP-N-acetyl-alpha-D-glucosamine contacts are provided by residues Leu-12–Gly-15, Lys-26, Gln-78, Gly-83–Thr-84, Ser-105–Asp-107, Gly-144, Glu-162, Asn-177, and Asn-235. Asp-107 serves as a coordination point for Mg(2+). Asn-235 contacts Mg(2+). Residues Gln-238–Ala-258 form a linker region. The segment at Gly-259–Lys-469 is N-acetyltransferase. Arg-341 and Lys-359 together coordinate UDP-N-acetyl-alpha-D-glucosamine. Residue His-371 is the Proton acceptor of the active site. Residues Tyr-374 and Asn-385 each contribute to the UDP-N-acetyl-alpha-D-glucosamine site. Acetyl-CoA contacts are provided by residues Ala-388, Asn-394–Tyr-395, Ser-413, Ala-431, and Arg-448.

The protein in the N-terminal section; belongs to the N-acetylglucosamine-1-phosphate uridyltransferase family. This sequence in the C-terminal section; belongs to the transferase hexapeptide repeat family. In terms of assembly, homotrimer. It depends on Mg(2+) as a cofactor.

It is found in the cytoplasm. The catalysed reaction is alpha-D-glucosamine 1-phosphate + acetyl-CoA = N-acetyl-alpha-D-glucosamine 1-phosphate + CoA + H(+). The enzyme catalyses N-acetyl-alpha-D-glucosamine 1-phosphate + UTP + H(+) = UDP-N-acetyl-alpha-D-glucosamine + diphosphate. The protein operates within nucleotide-sugar biosynthesis; UDP-N-acetyl-alpha-D-glucosamine biosynthesis; N-acetyl-alpha-D-glucosamine 1-phosphate from alpha-D-glucosamine 6-phosphate (route II): step 2/2. It functions in the pathway nucleotide-sugar biosynthesis; UDP-N-acetyl-alpha-D-glucosamine biosynthesis; UDP-N-acetyl-alpha-D-glucosamine from N-acetyl-alpha-D-glucosamine 1-phosphate: step 1/1. Its pathway is bacterial outer membrane biogenesis; LPS lipid A biosynthesis. Catalyzes the last two sequential reactions in the de novo biosynthetic pathway for UDP-N-acetylglucosamine (UDP-GlcNAc). The C-terminal domain catalyzes the transfer of acetyl group from acetyl coenzyme A to glucosamine-1-phosphate (GlcN-1-P) to produce N-acetylglucosamine-1-phosphate (GlcNAc-1-P), which is converted into UDP-GlcNAc by the transfer of uridine 5-monophosphate (from uridine 5-triphosphate), a reaction catalyzed by the N-terminal domain. This Koribacter versatilis (strain Ellin345) protein is Bifunctional protein GlmU.